Consider the following 329-residue polypeptide: Interleukin-12 subunit beta (329 aa).

The N-terminal stretch at 1–22 is a signal peptide; it reads MHPQQLVIAWLSLVLLAPPLMA. Residues 23–106 form the Ig-like C2-type domain; sequence IWELEKNVYV…LSHSFLLIHK (84 aa). Cysteines 50 and 90 form a disulfide. N-linked (GlcNAc...) asparagine glycans are attached at residues Asn135 and Asn223. One can recognise a Fibronectin type-III domain in the interval 238-329; it reads PPKNLQLKPL…WSNWASVSCS (92 aa).

Belongs to the IL-12B family. In terms of assembly, heterodimer with IL12A; disulfide-linked. The heterodimer is known as interleukin IL-12. Heterodimer with IL23A; disulfide-linked. The heterodimer is known as interleukin IL-23. Also secreted as a monomer. Interacts with NBR1; this interaction promotes IL-12 secretion.

Its subcellular location is the secreted. In terms of biological role, cytokine that can act as a growth factor for activated T and NK cells, enhance the lytic activity of NK/lymphokine-activated killer cells, and stimulate the production of IFN-gamma by resting PBMC. Functionally, associates with IL23A to form the IL-23 interleukin, a heterodimeric cytokine which functions in innate and adaptive immunity. IL-23 may constitute with IL-17 an acute response to infection in peripheral tissues. IL-23 binds to a heterodimeric receptor complex composed of IL12RB1 and IL23R, activates the Jak-Stat signaling cascade, stimulates memory rather than naive T-cells and promotes production of pro-inflammatory cytokines. IL-23 induces autoimmune inflammation and thus may be responsible for autoimmune inflammatory diseases and may be important for tumorigenesis. This Felis catus (Cat) protein is Interleukin-12 subunit beta (IL12B).